We begin with the raw amino-acid sequence, 226 residues long: Leucyl/phenylalanyl-tRNA--protein transferase (226 aa).

It belongs to the L/F-transferase family.

The protein resides in the cytoplasm. The catalysed reaction is N-terminal L-lysyl-[protein] + L-leucyl-tRNA(Leu) = N-terminal L-leucyl-L-lysyl-[protein] + tRNA(Leu) + H(+). The enzyme catalyses N-terminal L-arginyl-[protein] + L-leucyl-tRNA(Leu) = N-terminal L-leucyl-L-arginyl-[protein] + tRNA(Leu) + H(+). It carries out the reaction L-phenylalanyl-tRNA(Phe) + an N-terminal L-alpha-aminoacyl-[protein] = an N-terminal L-phenylalanyl-L-alpha-aminoacyl-[protein] + tRNA(Phe). Functionally, functions in the N-end rule pathway of protein degradation where it conjugates Leu, Phe and, less efficiently, Met from aminoacyl-tRNAs to the N-termini of proteins containing an N-terminal arginine or lysine. This Pseudomonas fluorescens (strain ATCC BAA-477 / NRRL B-23932 / Pf-5) protein is Leucyl/phenylalanyl-tRNA--protein transferase.